Consider the following 187-residue polypeptide: Tetraheme c-type cytochrome CymA (187 aa).

Topologically, residues 1–12 (MNWRALFKPSAK) are cytoplasmic. Residues 13-33 (YSILALLVVGIVIGVVGYFAT) form a helical membrane-spanning segment. At 34-187 (QQTLHATSTD…KGVAHPYPKG (154 aa)) the chain is on the periplasmic side. Cys46, Cys49, His64, Cys75, Cys78, His79, Asp97, Cys136, Cys139, His140, Cys173, Cys176, His177, and His182 together coordinate heme c.

It belongs to the NapC/NirT/NrfH family. As to quaternary structure, homodimer. Requires heme c as cofactor.

It localises to the cell inner membrane. It catalyses the reaction a quinol + 2 Fe(III)-[cytochrome c](out) = a quinone + 2 Fe(II)-[cytochrome c](out) + 2 H(+)(out). With respect to regulation, spectroscopic studies suggest that CymA requires a non-heme cofactor for quinol oxidation. Quinol dehydrogenase involved in several anaerobic electron transfer pathways. Acquires electrons from the membrane quinone pool and mediates their transfer to several periplasmic terminal reductases and redox shuttles, including the fumarate reductase FccA, the small tetraheme cytochrome (STC), the c-type cytochrome MtrA, the nitrate reductase NapA (either through NapB or directly), the nitrite reductase NrfA and probably also the DmsE subunit of dimethyl sulfoxide (DMSO) reductase. Required for growth on fumarate and on DMSO, and for the reduction of iron(III), manganese(IV), nitrite and nitrate. Not essential for growth on trimethylamine-N-oxide (TMAO). The protein is Tetraheme c-type cytochrome CymA of Shewanella oneidensis (strain ATCC 700550 / JCM 31522 / CIP 106686 / LMG 19005 / NCIMB 14063 / MR-1).